Consider the following 253-residue polypeptide: tRNA pseudouridine synthase A (253 aa).

Asp-53 serves as the catalytic Nucleophile. Tyr-112 contacts substrate.

It belongs to the tRNA pseudouridine synthase TruA family. In terms of assembly, homodimer.

The enzyme catalyses uridine(38/39/40) in tRNA = pseudouridine(38/39/40) in tRNA. Functionally, formation of pseudouridine at positions 38, 39 and 40 in the anticodon stem and loop of transfer RNAs. The chain is tRNA pseudouridine synthase A from Lactococcus lactis subsp. lactis (strain IL1403) (Streptococcus lactis).